The primary structure comprises 410 residues: Lipoyl synthase, mitochondrial (410 aa).

Residues 1–29 constitute a mitochondrion transit peptide; the sequence is MASTTVCSAARIRVASSQVLRSIANTRTY. Residues 29–39 show a composition bias toward polar residues; sequence YATTSPESSIP. The tract at residues 29–49 is disordered; that stretch reads YATTSPESSIPETKPTAKRTP. [4Fe-4S] cluster-binding residues include C129, C134, C140, C160, C164, C167, and S375. The region spanning 143–364 is the Radical SAM core domain; that stretch reads GGSKAAATAT…KEKAMEMGFL (222 aa).

Belongs to the radical SAM superfamily. Lipoyl synthase family. The cofactor is [4Fe-4S] cluster.

It is found in the mitochondrion. It catalyses the reaction [[Fe-S] cluster scaffold protein carrying a second [4Fe-4S](2+) cluster] + N(6)-octanoyl-L-lysyl-[protein] + 2 oxidized [2Fe-2S]-[ferredoxin] + 2 S-adenosyl-L-methionine + 4 H(+) = [[Fe-S] cluster scaffold protein] + N(6)-[(R)-dihydrolipoyl]-L-lysyl-[protein] + 4 Fe(3+) + 2 hydrogen sulfide + 2 5'-deoxyadenosine + 2 L-methionine + 2 reduced [2Fe-2S]-[ferredoxin]. The protein operates within protein modification; protein lipoylation via endogenous pathway; protein N(6)-(lipoyl)lysine from octanoyl-[acyl-carrier-protein]: step 2/2. Catalyzes the radical-mediated insertion of two sulfur atoms into the C-6 and C-8 positions of the octanoyl moiety bound to the lipoyl domains of lipoate-dependent enzymes, thereby converting the octanoylated domains into lipoylated derivatives. In Arthroderma otae (strain ATCC MYA-4605 / CBS 113480) (Microsporum canis), this protein is Lipoyl synthase, mitochondrial.